The primary structure comprises 276 residues: Putative pyruvate, phosphate dikinase regulatory protein 1 (276 aa).

157–164 is an ADP binding site; the sequence is GVSRTSKT.

Belongs to the pyruvate, phosphate/water dikinase regulatory protein family. PDRP subfamily.

It catalyses the reaction N(tele)-phospho-L-histidyl/L-threonyl-[pyruvate, phosphate dikinase] + ADP = N(tele)-phospho-L-histidyl/O-phospho-L-threonyl-[pyruvate, phosphate dikinase] + AMP + H(+). The enzyme catalyses N(tele)-phospho-L-histidyl/O-phospho-L-threonyl-[pyruvate, phosphate dikinase] + phosphate + H(+) = N(tele)-phospho-L-histidyl/L-threonyl-[pyruvate, phosphate dikinase] + diphosphate. Bifunctional serine/threonine kinase and phosphorylase involved in the regulation of the pyruvate, phosphate dikinase (PPDK) by catalyzing its phosphorylation/dephosphorylation. This is Putative pyruvate, phosphate dikinase regulatory protein 1 from Staphylococcus haemolyticus (strain JCSC1435).